A 322-amino-acid chain; its full sequence is Probable cardiolipin synthase (CMP-forming) (322 aa).

The next 3 helical transmembrane spans lie at 143-163, 199-219, and 289-309; these read IGYV…AFAG, LVIS…IVVF, and LQGL…SYVM.

Belongs to the CDP-alcohol phosphatidyltransferase class-I family.

The protein resides in the mitochondrion inner membrane. The catalysed reaction is a CDP-1,2-diacyl-sn-glycerol + a 1,2-diacyl-sn-glycero-3-phospho-(1'-sn-glycerol) = a cardiolipin + CMP + H(+). Its function is as follows. Catalyzes the synthesis of cardiolipin (CL) (diphosphatidylglycerol) by specifically transferring a phosphatidyl group from CDP-diacylglycerol to phosphatidylglycerol (PG). CL is a key phospholipid in mitochondrial membranes and plays important roles in maintaining the functional integrity and dynamics of mitochondria under both optimal and stress conditions. This is Probable cardiolipin synthase (CMP-forming) (CLS) from Drosophila melanogaster (Fruit fly).